A 638-amino-acid chain; its full sequence is 1-deoxy-D-xylulose-5-phosphate synthase (638 aa).

Thiamine diphosphate is bound by residues His78 and 119 to 121; that span reads GHS. Asp151 provides a ligand contact to Mg(2+). Residues 152–153, Asn180, Tyr289, and Glu371 each bind thiamine diphosphate; that span reads GA. Mg(2+) is bound at residue Asn180.

It belongs to the transketolase family. DXPS subfamily. Homodimer. The cofactor is Mg(2+). Thiamine diphosphate is required as a cofactor.

It catalyses the reaction D-glyceraldehyde 3-phosphate + pyruvate + H(+) = 1-deoxy-D-xylulose 5-phosphate + CO2. The protein operates within metabolic intermediate biosynthesis; 1-deoxy-D-xylulose 5-phosphate biosynthesis; 1-deoxy-D-xylulose 5-phosphate from D-glyceraldehyde 3-phosphate and pyruvate: step 1/1. Catalyzes the acyloin condensation reaction between C atoms 2 and 3 of pyruvate and glyceraldehyde 3-phosphate to yield 1-deoxy-D-xylulose-5-phosphate (DXP). In Bartonella bacilliformis (strain ATCC 35685 / KC583 / Herrer 020/F12,63), this protein is 1-deoxy-D-xylulose-5-phosphate synthase.